The primary structure comprises 250 residues: Mediator of RNA polymerase II transcription subunit 8 (250 aa).

Residues 217–250 form a disordered region; sequence SPMSAVSPGAGPLGKMPSGIKTNIKSANQVHPYR. Over residues 236–250 the composition is skewed to polar residues; sequence IKTNIKSANQVHPYR.

It belongs to the Mediator complex subunit 8 family. In terms of assembly, component of the Mediator complex.

It localises to the nucleus. In terms of biological role, component of the Mediator complex, a coactivator involved in the regulated transcription of nearly all RNA polymerase II-dependent genes. Mediator functions as a bridge to convey information from gene-specific regulatory proteins to the basal RNA polymerase II transcription machinery. Mediator is recruited to promoters by direct interactions with regulatory proteins and serves as a scaffold for the assembly of a functional preinitiation complex with RNA polymerase II and the general transcription factors. The sequence is that of Mediator of RNA polymerase II transcription subunit 8 (MED8) from Aedes aegypti (Yellowfever mosquito).